We begin with the raw amino-acid sequence, 444 residues long: tRNA-2-methylthio-N(6)-dimethylallyladenosine synthase (444 aa).

Positions 2 to 119 constitute an MTTase N-terminal domain; sequence KKLYIRTFGC…LPSMLNEVLT (118 aa). [4Fe-4S] cluster is bound by residues Cys11, Cys48, Cys82, Cys161, Cys165, and Cys168. The Radical SAM core domain occupies 147-379; the sequence is KTSSVTAFVS…QKTIDKNTER (233 aa). The TRAM domain occupies 382–444; that stretch reads KSMVGSVQKI…GNSLVGNLIA (63 aa).

The protein belongs to the methylthiotransferase family. MiaB subfamily. Monomer. It depends on [4Fe-4S] cluster as a cofactor.

The protein resides in the cytoplasm. It catalyses the reaction N(6)-dimethylallyladenosine(37) in tRNA + (sulfur carrier)-SH + AH2 + 2 S-adenosyl-L-methionine = 2-methylsulfanyl-N(6)-dimethylallyladenosine(37) in tRNA + (sulfur carrier)-H + 5'-deoxyadenosine + L-methionine + A + S-adenosyl-L-homocysteine + 2 H(+). Its function is as follows. Catalyzes the methylthiolation of N6-(dimethylallyl)adenosine (i(6)A), leading to the formation of 2-methylthio-N6-(dimethylallyl)adenosine (ms(2)i(6)A) at position 37 in tRNAs that read codons beginning with uridine. In Ruthia magnifica subsp. Calyptogena magnifica, this protein is tRNA-2-methylthio-N(6)-dimethylallyladenosine synthase.